The primary structure comprises 248 residues: Probable S-methyl-5'-thioinosine phosphorylase (248 aa).

Phosphate contacts are provided by residues Thr12 and 54–55 (RH). Met187 is a binding site for substrate. Residue Thr188 coordinates phosphate. 211–213 (NWA) contributes to the substrate binding site.

It belongs to the PNP/MTAP phosphorylase family. MTAP subfamily. As to quaternary structure, homotrimer.

The catalysed reaction is S-methyl-5'-thioinosine + phosphate = 5-(methylsulfanyl)-alpha-D-ribose 1-phosphate + hypoxanthine. It functions in the pathway purine metabolism; purine nucleoside salvage. Catalyzes the reversible phosphorylation of S-methyl-5'-thioinosine (MTI) to hypoxanthine and 5-methylthioribose-1-phosphate. Involved in the breakdown of S-methyl-5'-thioadenosine (MTA), a major by-product of polyamine biosynthesis. Catabolism of (MTA) occurs via deamination to MTI and phosphorolysis to hypoxanthine. This is Probable S-methyl-5'-thioinosine phosphorylase from Xylella fastidiosa (strain Temecula1 / ATCC 700964).